Reading from the N-terminus, the 822-residue chain is von Willebrand factor A domain-containing protein 5A (822 aa).

One can recognise a VIT domain in the interval 1–131 (MEHHWGLITG…KVAVTLRYVQ (131 aa)). The VWFA domain maps to 281-469 (EFVFLMDRSG…LALQCALDDI (189 aa)). The disordered stretch occupies residues 657–682 (SMPSPAPIENQGVADSSNEKSNSQNE). Over residues 669-680 (VADSSNEKSNSQ) the composition is skewed to polar residues.

Its function is as follows. May play a role in tumorigenesis as a tumor suppressor. Altered expression of this protein and disruption of the molecular pathway it is involved in may contribute directly to or modify tumorigenesis. This Rattus norvegicus (Rat) protein is von Willebrand factor A domain-containing protein 5A (Vwa5a).